Consider the following 472-residue polypeptide: Eukaryotic translation initiation factor 2 subunit 3B (472 aa).

Residue A2 is modified to N-acetylalanine. S16 is modified (phosphoserine). In terms of domain architecture, tr-type G spans 39–248; sequence QATINIGTIG…IVKKIPVPPR (210 aa). The tract at residues 48–55 is G1; it reads GHVAHGKS. Residue 51-56 participates in GTP binding; the sequence is AHGKST. The G2 stretch occupies residues 76-80; it reads NITIK. The G3 stretch occupies residues 134–137; sequence DCPG. GTP is bound by residues 190–193 and 225–227; these read NKID and SAQ. Residues 190 to 193 are G4; that stretch reads NKID. The G5 stretch occupies residues 225–227; that stretch reads SAQ.

This sequence belongs to the TRAFAC class translation factor GTPase superfamily. Classic translation factor GTPase family. EIF2G subfamily. EIF2 is a heterotrimer composed of an alpha, a beta and a gamma chain. eIF2 is member of the 43S pre-initiation complex (43S PIC). As to expression, specifically expressed in testis at the mRNA level.

It carries out the reaction GTP + H2O = GDP + phosphate + H(+). Member of the eIF2 complex that functions in the early steps of protein synthesis by forming a ternary complex with GTP and initiator tRNA. This complex binds to a 40S ribosomal subunit, followed by mRNA binding to form the 43S pre-initiation complex (43S PIC). Junction of the 60S ribosomal subunit to form the 80S initiation complex is preceded by hydrolysis of the GTP bound to eIF2 and release of an eIF2-GDP binary complex. In order for eIF2 to recycle and catalyze another round of initiation, the GDP bound to eIF2 must exchange with GTP by way of a reaction catalyzed by eIF-2B. The protein is Eukaryotic translation initiation factor 2 subunit 3B of Homo sapiens (Human).